The primary structure comprises 83 residues: RNA-binding protein Hfq (83 aa).

One can recognise a Sm domain in the interval 10-70 (DAFLNQVRKE…ISTVSPLKPV (61 aa)).

Belongs to the Hfq family. Homohexamer.

RNA chaperone that binds small regulatory RNA (sRNAs) and mRNAs to facilitate mRNA translational regulation in response to envelope stress, environmental stress and changes in metabolite concentrations. Also binds with high specificity to tRNAs. This chain is RNA-binding protein Hfq, found in Pelotomaculum thermopropionicum (strain DSM 13744 / JCM 10971 / SI).